A 294-amino-acid chain; its full sequence is Nucleophosmin (294 aa).

Acidic residues predominate over residues 121 to 133; that stretch reads LEEEPESEDEEED. Residues 121–244 are disordered; the sequence is LEEEPESEDE…PKTPKVPLSL (124 aa). The Nuclear localization signal signature appears at 153-158; the sequence is PQKKPK. Residues 161-186 are compositionally biased toward acidic residues; that stretch reads EDDEDDDEDEDDDEDDEDDLDDDEEE. The short motif at 190-196 is the Nuclear localization signal element; it reads PMKKPAR. Residues 223–233 show a composition bias toward basic and acidic residues; the sequence is KTPDSKKDKSL.

Belongs to the nucleoplasmin family. In terms of assembly, decamer formed by two pentameric rings associated in a head-to-head fashion. Phosphorylated.

It is found in the cytoplasm. The protein localises to the nucleus. It localises to the nucleoplasm. The protein resides in the nucleolus. Its function is as follows. Acts as a chaperonin for the core histones H3, H2B and H4. Associated with nucleolar ribonucleoprotein structures and bind single-stranded nucleic acids. It may function in the assembly and/or transport of ribosome. May stimulate endonuclease activity on apurinic/apyrimidinic (AP) double-stranded DNA. May inhibit endonuclease activity on AP single-stranded RNA. This chain is Nucleophosmin (NPM1), found in Gallus gallus (Chicken).